The following is a 123-amino-acid chain: MARIAGIDLPKEKRVEVGLTYIYGIGINRSREILKETGVNPDTRVKDLSEEEVNTIRDYIGKNFVIEGDLRRTIALDIKRLVEIGCYRGIRHRRGLPVRGQKTKTNARTRKGPKRAISGKKNK.

Residues 95-123 (GLPVRGQKTKTNARTRKGPKRAISGKKNK) are disordered.

This sequence belongs to the universal ribosomal protein uS13 family. In terms of assembly, part of the 30S ribosomal subunit. Forms a loose heterodimer with protein S19. Forms two bridges to the 50S subunit in the 70S ribosome.

Functionally, located at the top of the head of the 30S subunit, it contacts several helices of the 16S rRNA. In the 70S ribosome it contacts the 23S rRNA (bridge B1a) and protein L5 of the 50S subunit (bridge B1b), connecting the 2 subunits; these bridges are implicated in subunit movement. Contacts the tRNAs in the A and P-sites. The chain is Small ribosomal subunit protein uS13 from Clostridium novyi (strain NT).